A 171-amino-acid polypeptide reads, in one-letter code: Shikimate kinase (171 aa).

Residue 13–18 (GVGKST) participates in ATP binding. S17 provides a ligand contact to Mg(2+). Substrate contacts are provided by D35, R59, and G81. R118 is an ATP binding site. R136 serves as a coordination point for substrate. R153 provides a ligand contact to ATP.

It belongs to the shikimate kinase family. In terms of assembly, monomer. Requires Mg(2+) as cofactor.

It is found in the cytoplasm. The enzyme catalyses shikimate + ATP = 3-phosphoshikimate + ADP + H(+). It participates in metabolic intermediate biosynthesis; chorismate biosynthesis; chorismate from D-erythrose 4-phosphate and phosphoenolpyruvate: step 5/7. In terms of biological role, catalyzes the specific phosphorylation of the 3-hydroxyl group of shikimic acid using ATP as a cosubstrate. The polypeptide is Shikimate kinase (Streptomyces avermitilis (strain ATCC 31267 / DSM 46492 / JCM 5070 / NBRC 14893 / NCIMB 12804 / NRRL 8165 / MA-4680)).